The following is a 371-amino-acid chain: Ferrochelatase (371 aa).

Fe cation contacts are provided by histidine 218 and glutamate 299.

This sequence belongs to the ferrochelatase family.

It is found in the cytoplasm. The catalysed reaction is heme b + 2 H(+) = protoporphyrin IX + Fe(2+). It functions in the pathway porphyrin-containing compound metabolism; protoheme biosynthesis; protoheme from protoporphyrin-IX: step 1/1. Catalyzes the ferrous insertion into protoporphyrin IX. In Ralstonia pickettii (strain 12J), this protein is Ferrochelatase.